A 268-amino-acid polypeptide reads, in one-letter code: MASSKSDPFQSIFAFKPHRKRHNFIFLHGFGSEYSSFKHVFKLFEKKRWSFFAFNFPGHGNNQSNSVDELKLKHYVELVCDFIIQKRLKKVVLVGHSMGGAIAVLVNAVLRERIKALVLVAPMNQTSFVVSKKRILDTLFTRSPKNQQDFIEHTDDKKSIVNFFVGAFKKRVNFKTLYSDMVQNAKYGNDYLEAGYNAIKDKPTLVVLGSNDIVTPTKASVEYLAKHSETIIFKIIDGVGHSPHYYAPKLFFDYIGEFLDNIKRNKDK.

H28 is a catalytic residue. H96 (charge relay system) is an active-site residue.

The protein belongs to the lipase/esterase LIP3/BchO family.

In Mycoplasma pneumoniae (strain ATCC 29342 / M129 / Subtype 1) (Mycoplasmoides pneumoniae), this protein is Putative esterase/lipase 2.